We begin with the raw amino-acid sequence, 231 residues long: 2,3-bisphosphoglycerate-dependent phosphoglycerate mutase (231 aa).

Residues 8–15, 21–22, Arg-60, 87–90, Lys-98, 114–115, and 183–184 contribute to the substrate site; these read RHGESEWN, TG, ERHY, RR, and GN. His-9 functions as the Tele-phosphohistidine intermediate in the catalytic mechanism. Glu-87 acts as the Proton donor/acceptor in catalysis.

It belongs to the phosphoglycerate mutase family. BPG-dependent PGAM subfamily.

It carries out the reaction (2R)-2-phosphoglycerate = (2R)-3-phosphoglycerate. It functions in the pathway carbohydrate degradation; glycolysis; pyruvate from D-glyceraldehyde 3-phosphate: step 3/5. Its function is as follows. Catalyzes the interconversion of 2-phosphoglycerate and 3-phosphoglycerate. The sequence is that of 2,3-bisphosphoglycerate-dependent phosphoglycerate mutase from Streptococcus pyogenes serotype M49 (strain NZ131).